A 419-amino-acid chain; its full sequence is Zinc finger protein Pegasus (419 aa).

Lysine 5 is covalently cross-linked (Glycyl lysine isopeptide (Lys-Gly) (interchain with G-Cter in SUMO2)). C2H2-type zinc fingers lie at residues 82–104, 110–132, and 138–161; these read LKCRYCNYASKGTARLIEHIRIH, HRCHLCPFASAYERHLEAHMRSH, and YKCELCSFRCSDRSNLSHHRRRKH. Lysine 185 participates in a covalent cross-link: Glycyl lysine isopeptide (Lys-Gly) (interchain with G-Cter in SUMO2). Composition is skewed to polar residues over residues 223 to 236 and 262 to 273; these read QTDSYESMAKTTPT and LSSLPPENQNPA. Disordered stretches follow at residues 223 to 247 and 262 to 356; these read QTDSYESMAKTTPTGGLPRDPQELM and LSSL…PALP. Low complexity predominate over residues 290–311; that stretch reads QPSTQAVVSAVSASIPQSSSPT. The segment covering 332 to 349 has biased composition (polar residues); sequence SEPSAHTSTPSIGNSQPS. 2 C2H2-type zinc fingers span residues 364–386 and 392–416; these read HHCQHCDMYFADNILYTIHMGCH and FQCNICGCKCKNKYDFACHFARGQH.

It belongs to the Ikaros C2H2-type zinc-finger protein family. In terms of assembly, self-associates. Interacts with other family members; IKZF1, IKZF2, IKZF3 and IKZF4. As to expression, expressed in brain, heart, skeletal muscle, kidney, and liver. Expressed in the hematopoietic cell lines MOLT-4, NALM-6 and K-562. Highly expressed in THP-1 and M-07e cell lines, which have characteristics of myeloid and early megakaryocytic cells respectively.

Its subcellular location is the nucleus. In terms of biological role, transcriptional repressor that binds the core 5'GNNTGTNG-3' DNA consensus sequence. Involved in megakaryocyte differentiation. In Homo sapiens (Human), this protein is Zinc finger protein Pegasus (IKZF5).